The following is a 133-amino-acid chain: Serine/threonine-protein kinase RsbT (133 aa).

It carries out the reaction L-seryl-[protein] + ATP = O-phospho-L-seryl-[protein] + ADP + H(+). The catalysed reaction is L-threonyl-[protein] + ATP = O-phospho-L-threonyl-[protein] + ADP + H(+). Its function is as follows. Provides the crucial link between the upstream module (communication of environmental stress) and the downstream module (integration of the environmental signals with signals of energy stress) that compose the signal transduction pathway controlling the sigma-B factor. Phosphorylates and inactivates its specific antagonist protein RsbS thanks to its serine kinase activity. Upon phosphorylation of RsbS, RsbT is released to stimulate RsbU, a PP2C phosphatase, thereby initiating the signaling cascade that ultimately activates sigma-B. The activity of the RsbU phosphatase may be stimulated by a long-lived interaction with RsbT and the serine kinase function of RsbT is not required to directly modify RsbU. Also phosphorylates RsbR thanks to its threonine kinase activity, preventing it to phosphorylate RsbT. This chain is Serine/threonine-protein kinase RsbT (rsbT), found in Bacillus subtilis (strain 168).